A 452-amino-acid chain; its full sequence is MSAIKKIHAREVLDSRGNPTVQVEVYTELKGYGSAMVPSGASTGSREALELRDKGSKFESNWFGGKGVMQAVENVNKLIAPALIGFEVTDQRQVDLAMKALDGTKNKEKLGANAILGVSLAVARAAANELDLPLYKYLGGFNAHKLPLPMLNVINGGEHASNTLDFQEFMVMPVGAKSFREALQMANFVFHNLAKLLKKHGHGVQVGDEGGFAPNFKSHEEALDFLVEAIKLSGYKPATSGEKAVAIAMDCASSELYKDGKYTFGKLKKAIEEKQPGFENLGKTKLVYTTDELIDYLDHLVSKYPIVSIEDGLAESDWAGFEKLTKRLGHKLQVVGDDLTVTNTELLAKAIERKAMNSILIKVNQIGSLTETFEAIQMAQMANMTAVVSHRSGETEDTTIADVAVAMNTGQIKTGSMSRTDRIAKYNRLLAIEEELSKASTFPKDVFYNLKK.

Gln167 is a (2R)-2-phosphoglycerate binding site. Glu209 (proton donor) is an active-site residue. Mg(2+)-binding residues include Asp250, Glu310, and Asp337. 4 residues coordinate (2R)-2-phosphoglycerate: Lys362, Arg391, Ser392, and Lys413. Residue Lys362 is the Proton acceptor of the active site.

This sequence belongs to the enolase family. It depends on Mg(2+) as a cofactor.

It is found in the cytoplasm. Its subcellular location is the secreted. The protein localises to the cell surface. The catalysed reaction is (2R)-2-phosphoglycerate = phosphoenolpyruvate + H2O. Its pathway is carbohydrate degradation; glycolysis; pyruvate from D-glyceraldehyde 3-phosphate: step 4/5. Functionally, catalyzes the reversible conversion of 2-phosphoglycerate (2-PG) into phosphoenolpyruvate (PEP). It is essential for the degradation of carbohydrates via glycolysis. The protein is Enolase of Mycoplasmopsis synoviae (strain 53) (Mycoplasma synoviae).